We begin with the raw amino-acid sequence, 337 residues long: Transcription initiation factor IIB (337 aa).

The TFIIB-type zinc finger occupies Glu-37–Asp-68. 4 residues coordinate Zn(2+): Cys-41, Cys-44, Cys-60, and Cys-63. 2 tandem repeats follow at residues Ser-154 to Leu-237 and Asp-248 to Glu-329.

This sequence belongs to the TFIIB family.

Functionally, stabilizes TBP binding to an archaeal box-A promoter. Also responsible for recruiting RNA polymerase II to the pre-initiation complex (DNA-TBP-TFIIB). This is Transcription initiation factor IIB from Methanosarcina mazei (Methanosarcina frisia).